The sequence spans 424 residues: Hemagglutinin-esterase (424 aa).

The first 16 residues, 1 to 16 (MFLLPRFVLVSCIIGS), serve as a signal peptide directing secretion. The tract at residues 7–127 (FVLVSCIIGS…SNDIWMQNKG (121 aa)) is esterase domain 1. Topologically, residues 17 to 392 (LGFDNPPTNV…PICVYDPLPI (376 aa)) are virion surface. Ser40 acts as the Nucleophile in catalysis. An intrachain disulfide couples Cys44 to Cys65. Asn54, Asn89, Asn153, Asn236, and Asn301 each carry an N-linked (GlcNAc...) asparagine; by host glycan. 3 disulfide bridges follow: Cys113–Cys162, Cys197–Cys276, and Cys205–Cys249. Positions 128-266 (LFYTQVYKNM…GNYLAISNEL (139 aa)) are receptor binding. Residues 267-379 (LLTVPTKAIC…RCPTAADINT (113 aa)) form an esterase domain 2 region. Cys307 and Cys312 form a disulfide bridge. N-linked (GlcNAc...) asparagine; by host glycosylation occurs at Asn316. Residues Asp326 and His329 each act as charge relay system in the active site. Cys347 and Cys371 are joined by a disulfide. The N-linked (GlcNAc...) asparagine; by host glycan is linked to Asn358. Residues 393 to 413 (ILLGILLGVAVIIIVVLLLYF) form a helical membrane-spanning segment. The Intravirion segment spans residues 414–424 (MVDNGTRLHDA). A glycan (N-linked (GlcNAc...) asparagine; by host) is linked at Asn417.

This sequence belongs to the influenza type C/coronaviruses hemagglutinin-esterase family. As to quaternary structure, homodimer; disulfide-linked. Forms a complex with the M protein in the pre-Golgi. Associates then with S-M complex to form a ternary complex S-M-HE. In terms of processing, N-glycosylated in the host RER.

It localises to the virion membrane. The protein localises to the host cell membrane. It carries out the reaction N-acetyl-9-O-acetylneuraminate + H2O = N-acetylneuraminate + acetate + H(+). The catalysed reaction is N-acetyl-4-O-acetylneuraminate + H2O = N-acetylneuraminate + acetate + H(+). Structural protein that makes short spikes at the surface of the virus. Contains receptor binding and receptor-destroying activities. Mediates de-O-acetylation of N-acetyl-4-O-acetylneuraminic acid, which is probably the receptor determinant recognized by the virus on the surface of erythrocytes and susceptible cells. This receptor-destroying activity is important for virus release as it probably helps preventing self-aggregation and ensures the efficient spread of the progeny virus from cell to cell. May serve as a secondary viral attachment protein for initiating infection, the spike protein being the major one. May become a target for both the humoral and the cellular branches of the immune system. This Bovine coronavirus (strain 98TXSF-110-LUN) (BCoV-LUN) protein is Hemagglutinin-esterase.